The primary structure comprises 412 residues: tRNA N6-adenosine threonylcarbamoyltransferase, mitochondrial (412 aa).

A mitochondrion-targeting transit peptide spans 1–78 (MLCLVYNSIL…IICLNTHRTI (78 aa)). The a divalent metal cation site is built by His157 and His161. Substrate is bound by residues 179–183 (LVSGG), Asp212, Ala228, Glu232, 328–329 (RN), and Ser363. Asp364 lines the a divalent metal cation pocket.

The protein belongs to the KAE1 / TsaD family. In terms of assembly, homodimer. A divalent metal cation serves as cofactor.

It localises to the mitochondrion. It carries out the reaction L-threonylcarbamoyladenylate + adenosine(37) in tRNA = N(6)-L-threonylcarbamoyladenosine(37) in tRNA + AMP + H(+). Required for the formation of a threonylcarbamoyl group on adenosine at position 37 (t(6)A37) in mitochondrial tRNAs that read codons beginning with adenine. Probably involved in the transfer of the threonylcarbamoyl moiety of threonylcarbamoyl-AMP (TC-AMP) to the N6 group of A37. Involved in mitochondrial genome maintenance. This chain is tRNA N6-adenosine threonylcarbamoyltransferase, mitochondrial (pgp1), found in Schizosaccharomyces pombe (strain 972 / ATCC 24843) (Fission yeast).